The chain runs to 231 residues: Flagellar L-ring protein (231 aa).

A signal peptide spans 1–18 (MNRLMIVSLLGIATALGG). The N-palmitoyl cysteine moiety is linked to residue C19. The S-diacylglycerol cysteine moiety is linked to residue C19. The segment at 118–141 (LSLSAEYGGSRDAKGDSQAGQSNS) is disordered.

It belongs to the FlgH family. As to quaternary structure, the basal body constitutes a major portion of the flagellar organelle and consists of four rings (L,P,S, and M) mounted on a central rod.

Its subcellular location is the cell outer membrane. The protein localises to the bacterial flagellum basal body. Functionally, assembles around the rod to form the L-ring and probably protects the motor/basal body from shearing forces during rotation. In Pseudomonas aeruginosa (strain UCBPP-PA14), this protein is Flagellar L-ring protein.